The sequence spans 1388 residues: DNA-directed RNA polymerase subunit beta' (1388 aa).

C76, C78, C91, and C94 together coordinate Zn(2+). Mg(2+) is bound by residues D467, D469, and D471. Zn(2+)-binding residues include C810, C884, C891, and C894.

The protein belongs to the RNA polymerase beta' chain family. In terms of assembly, the RNAP catalytic core consists of 2 alpha, 1 beta, 1 beta' and 1 omega subunit. When a sigma factor is associated with the core the holoenzyme is formed, which can initiate transcription. Mg(2+) serves as cofactor. Requires Zn(2+) as cofactor.

The enzyme catalyses RNA(n) + a ribonucleoside 5'-triphosphate = RNA(n+1) + diphosphate. Its function is as follows. DNA-dependent RNA polymerase catalyzes the transcription of DNA into RNA using the four ribonucleoside triphosphates as substrates. The sequence is that of DNA-directed RNA polymerase subunit beta' from Lawsonia intracellularis (strain PHE/MN1-00).